The chain runs to 87 residues: Cell division topological specificity factor (87 aa).

The protein belongs to the MinE family.

Prevents the cell division inhibition by proteins MinC and MinD at internal division sites while permitting inhibition at polar sites. This ensures cell division at the proper site by restricting the formation of a division septum at the midpoint of the long axis of the cell. This is Cell division topological specificity factor from Leptothrix cholodnii (strain ATCC 51168 / LMG 8142 / SP-6) (Leptothrix discophora (strain SP-6)).